The sequence spans 288 residues: GTP-binding protein 8 (288 aa).

In terms of domain architecture, EngB-type G spans H109–N282. Residues G117 to S124, G146 to K150, D164 to G167, T226 to D229, and V261 to A263 contribute to the GTP site. Mg(2+)-binding residues include S124 and T148.

This sequence belongs to the TRAFAC class TrmE-Era-EngA-EngB-Septin-like GTPase superfamily. EngB GTPase family. It depends on Mg(2+) as a cofactor.

In Bos taurus (Bovine), this protein is GTP-binding protein 8 (GTPBP8).